A 75-amino-acid chain; its full sequence is Small ribosomal subunit protein bS18 (75 aa).

Belongs to the bacterial ribosomal protein bS18 family. As to quaternary structure, part of the 30S ribosomal subunit. Forms a tight heterodimer with protein bS6.

In terms of biological role, binds as a heterodimer with protein bS6 to the central domain of the 16S rRNA, where it helps stabilize the platform of the 30S subunit. The chain is Small ribosomal subunit protein bS18 from Shewanella denitrificans (strain OS217 / ATCC BAA-1090 / DSM 15013).